The following is a 361-amino-acid chain: Nicotinate-nucleotide--dimethylbenzimidazole phosphoribosyltransferase (361 aa).

Glu-314 functions as the Proton acceptor in the catalytic mechanism.

The protein belongs to the CobT family.

It catalyses the reaction 5,6-dimethylbenzimidazole + nicotinate beta-D-ribonucleotide = alpha-ribazole 5'-phosphate + nicotinate + H(+). Its pathway is nucleoside biosynthesis; alpha-ribazole biosynthesis; alpha-ribazole from 5,6-dimethylbenzimidazole: step 1/2. In terms of biological role, catalyzes the synthesis of alpha-ribazole-5'-phosphate from nicotinate mononucleotide (NAMN) and 5,6-dimethylbenzimidazole (DMB). The protein is Nicotinate-nucleotide--dimethylbenzimidazole phosphoribosyltransferase of Mycobacterium bovis (strain BCG / Pasteur 1173P2).